Here is a 146-residue protein sequence, read N- to C-terminus: Hemoglobin subunit beta-1 (146 aa).

Positions 2 to 146 (EWTDKERAII…VVSALGKQYH (145 aa)) constitute a Globin domain. H63 and H92 together coordinate heme b.

It belongs to the globin family. In terms of assembly, hb 1 is a heterotetramer of two alpha-1 and two beta-1 chains. In terms of tissue distribution, red blood cells.

In terms of biological role, involved in oxygen transport from gills to the various peripheral tissues. The protein is Hemoglobin subunit beta-1 (hbb1) of Gobionotothen gibberifrons (Humped rockcod).